A 343-amino-acid chain; its full sequence is Lipase chaperone (343 aa).

The chain crosses the membrane as a helical span at residues 7–27 (IYLGIGLVALLMIFIYWLMPK).

This sequence belongs to the lipase chaperone family.

The protein resides in the cell inner membrane. May be involved in the folding of the extracellular lipase during its passage through the periplasm. This Acinetobacter baylyi (strain ATCC 33305 / BD413 / ADP1) protein is Lipase chaperone (lifO).